A 129-amino-acid chain; its full sequence is Small ribosomal subunit protein uS11 (129 aa).

Belongs to the universal ribosomal protein uS11 family. As to quaternary structure, part of the 30S ribosomal subunit. Interacts with proteins S7 and S18. Binds to IF-3.

Functionally, located on the platform of the 30S subunit, it bridges several disparate RNA helices of the 16S rRNA. Forms part of the Shine-Dalgarno cleft in the 70S ribosome. This Stenotrophomonas maltophilia (strain R551-3) protein is Small ribosomal subunit protein uS11.